We begin with the raw amino-acid sequence, 200 residues long: ATP synthase subunit s, mitochondrial (200 aa).

A mitochondrion-targeting transit peptide spans 1 to 25 (MMPFGKISQQLCGVKKLPWSCDSRY). An N-terminal domain region spans residues 1 to 61 (MMPFGKISQQ…SEWLLRCGAM (61 aa)). Position 59 (G59) interacts with Mg(2+). LRR repeat units follow at residues 62-87 (VRYHGQERWQKDYNHLPTGPLDKYKI), 88-116 (QAIDATDSCIMSIGFDHMEGLEHVEKIRL), 117-141 (CKCHYIEDDCLLRLSQLENLQKTIL), and 142-173 (EMEIISCGNITDKGIIALRHLRNLKYLLLSDL). T93 is a binding site for Mg(2+).

Belongs to the ATP synthase subunit s family. As to quaternary structure, homotetramer. Associates with ATP synthase.

It localises to the mitochondrion. Its subcellular location is the mitochondrion inner membrane. Functionally, involved in regulation of mitochondrial membrane ATP synthase. Necessary for H(+) conduction of ATP synthase. Facilitates energy-driven catalysis of ATP synthesis by blocking a proton leak through an alternative proton exit pathway. In Homo sapiens (Human), this protein is ATP synthase subunit s, mitochondrial.